The primary structure comprises 366 residues: Variable large protein 10 (366 aa).

A signal peptide spans 1-18; sequence MRKRISAIIMTLFMVLAS. C19 carries the N-palmitoyl cysteine lipid modification. C19 is lipidated: S-diacylglycerol cysteine.

The protein belongs to the variable large protein (Vlp) family. Beta subfamily.

The protein resides in the cell outer membrane. Its function is as follows. The Vlp and Vsp proteins are antigenically distinct proteins, only one vlp or vsp gene is transcriptionally active at any one time. Switching between these genes is a mechanism of host immune response evasion. This Borrelia hermsii protein is Variable large protein 10.